Reading from the N-terminus, the 79-residue chain is MSFEVFEKLEAKVQQAIDTITLLQMEIEELKEQNNTLSQDVQAAAGSRESLVRENEQLKEEQVVWQERLRALLGKMEEV.

Positions 4–78 form a coiled coil; the sequence is EVFEKLEAKV…LRALLGKMEE (75 aa).

Belongs to the ZapB family. As to quaternary structure, homodimer. The ends of the coiled-coil dimer bind to each other, forming polymers. Interacts with FtsZ.

The protein resides in the cytoplasm. In terms of biological role, non-essential, abundant cell division factor that is required for proper Z-ring formation. It is recruited early to the divisome by direct interaction with FtsZ, stimulating Z-ring assembly and thereby promoting cell division earlier in the cell cycle. Its recruitment to the Z-ring requires functional FtsA or ZipA. The polypeptide is Cell division protein ZapB (Pectobacterium atrosepticum (strain SCRI 1043 / ATCC BAA-672) (Erwinia carotovora subsp. atroseptica)).